Here is a 189-residue protein sequence, read N- to C-terminus: GTPase HRas (189 aa).

10-17 (GAKGVGKS) provides a ligand contact to GTP. An Effector region motif is present at residues 32–40 (YDPTIEDSY). Residues 57–61 (DTAGQ) and 116–119 (NKCD) each bind GTP. S-palmitoyl cysteine; by host attachment occurs at residues Cys-181 and Cys-184. At Cys-186 the chain carries Cysteine methyl ester; by host. Residue Cys-186 is the site of S-farnesyl cysteine; by host attachment. The propeptide at 187–189 (VLS) is removed in mature form.

Belongs to the small GTPase superfamily. Ras family.

It is found in the host cell membrane. It carries out the reaction GTP + H2O = GDP + phosphate + H(+). Its activity is regulated as follows. Alternates between an inactive form bound to GDP and an active form bound to GTP. Activated by a guanine nucleotide-exchange factor (GEF) and inactivated by a GTPase-activating protein (GAP). In Moloney murine sarcoma virus (MoMSV), this protein is GTPase HRas (H-RAS).